The primary structure comprises 147 residues: MVHFTAEEKAAITSLWGKMNVEEAGGEALGRLLVVYPWTQRFFDNFGNLSSPSAILGNPKVKAHGKKVLTSFEDAIKNMDNLKTTFAKLSELHCDKLHVDPENFRLLGNVMVIILATHFGKEFTPEVQAAWQKLVSAVAIALGHKYH.

Residues 3 to 147 (HFTAEEKAAI…VAIALGHKYH (145 aa)) form the Globin domain. Serine 14 and serine 51 each carry phosphoserine. Heme b-binding residues include histidine 64 and histidine 93.

The protein belongs to the globin family. In terms of assembly, heterotetramer of two alpha chains and two epsilon chains in early embryonic hemoglobin Gower-2; two zeta chains and two epsilon chains in early embryonic hemoglobin Gower-1. As to expression, red blood cells.

In terms of biological role, the epsilon chain is a beta-type chain of early mammalian embryonic hemoglobin. The protein is Hemoglobin subunit epsilon (HBE1) of Lagothrix lagotricha (Brown woolly monkey).